The chain runs to 476 residues: MATPANQTGRITQVIGAVVDVQFEGHLPAILNAIETKNGDNRLVLEVAQHLGESTVRTIAMDTTEGLVRGQEVTDTGAPISVPVGAGTLGRIMNVIGEPVDEQGPIKSEGLRAIHQEAPAYTDQSTEAEILVTGIKVVDLLAPYAKGGKIGLFGGAGVGKTVLIQELINNVARAHGGYSVFAGVGERTREGNDLYHEFIESGVNKKGGGEGSKCALVYGQMNEPPGARARVGLTGLTVAEHFRDQGQDVLFFVDNIFRFTQAGSEVSALLGRIPSAVGYQPTLATDMGALQERITTTTKGSITSVQAIYVPADDLTDPAPATSFAHLDATTVLNRAISEKGIYPAVDPLDSTSRMLSASIVGEEHYNTARMVQQILQKYKSLQDIIAILGMDELSEEDKLTVARARKIERFLSQPFFVAEVFTGSPGKFVDLADTIKGFRAICEGKYDHLPEAAFYMVGTIEEAVEKGKKLAAEAA.

154–161 (GGAGVGKT) lines the ATP pocket.

It belongs to the ATPase alpha/beta chains family. F-type ATPases have 2 components, CF(1) - the catalytic core - and CF(0) - the membrane proton channel. CF(1) has five subunits: alpha(3), beta(3), gamma(1), delta(1), epsilon(1). CF(0) has four main subunits: a(1), b(1), b'(1) and c(9-12).

The protein resides in the cell inner membrane. The enzyme catalyses ATP + H2O + 4 H(+)(in) = ADP + phosphate + 5 H(+)(out). Its function is as follows. Produces ATP from ADP in the presence of a proton gradient across the membrane. The catalytic sites are hosted primarily by the beta subunits. The protein is ATP synthase subunit beta of Rhodopseudomonas palustris (strain ATCC BAA-98 / CGA009).